Reading from the N-terminus, the 397-residue chain is Purine ribonucleoside efflux pump NepI (397 aa).

Topologically, residues 1-21 (MNENIAEKFRADGVARPNWSA) are cytoplasmic. Residues 22–42 (VFAVAFCVACLITVEFLPVSL) traverse the membrane as a helical segment. Residues 43-54 (LTPMAQDLGISE) are Periplasmic-facing. Residues 55 to 75 (GVAGQSVTVTAFVAMFSSLFI) form a helical membrane-spanning segment. Over 76–85 (TQIIQATDRR) the chain is Cytoplasmic. The chain crosses the membrane as a helical span at residues 86–106 (YIVILFAVLLTASCLMVSFAN). Position 107 (serine 107) is a topological domain, periplasmic. Residues 108–128 (FTLLLLGRACLGLALGGFWAI) traverse the membrane as a helical segment. The Cytoplasmic portion of the chain corresponds to 129–147 (SASLTMRLVPARTVPKALS). Residues 148 to 168 (VIFGAVSIALVIAAPLGSFLG) traverse the membrane as a helical segment. Residues 169–175 (GIIGWRN) are Periplasmic-facing. Residues 176-196 (VFNAAAVMGVLCVIWVVKSLP) traverse the membrane as a helical segment. At 197-215 (SLPGEPSHQKQNMFSLLQR) the chain is on the cytoplasmic side. Residues 216 to 236 (PGVMAGMIAIFMSFAGQFAFF) traverse the membrane as a helical segment. The Periplasmic portion of the chain corresponds to 237 to 255 (TYIRPVYMNLAGFDVDGLT). A helical membrane pass occupies residues 256–276 (LVLLSFGIASFVGTSFSSYVL). Topologically, residues 277 to 281 (KRSVK) are cytoplasmic. A helical transmembrane segment spans residues 282–302 (LALAGAPLLLALSALTLIVWG). The Periplasmic segment spans residues 303-305 (SDK). Residues 306 to 326 (TVAAAIAIIWGLAFALVPVGW) form a helical membrane-spanning segment. Over 327-343 (STWITRSLADQAEKAGS) the chain is Cytoplasmic. A helical membrane pass occupies residues 344–364 (IQVAVIQLANTCGAAVGGYAL). Over 365-366 (DN) the chain is Periplasmic. Residues 367-387 (FGLLSPLALSGGLMLLTALVV) traverse the membrane as a helical segment. Residues 388–397 (AAKVRITPMS) are Cytoplasmic-facing.

This sequence belongs to the major facilitator superfamily. DHA1 family. NepI (TC 2.A.1.2.26) subfamily.

Its subcellular location is the cell inner membrane. The enzyme catalyses inosine(in) + H(+)(out) = inosine(out) + H(+)(in). It carries out the reaction guanosine(in) + H(+)(out) = guanosine(out) + H(+)(in). Functionally, involved in the efflux of purine ribonucleosides, such as inosine and guanosine. The chain is Purine ribonucleoside efflux pump NepI from Salmonella paratyphi A (strain ATCC 9150 / SARB42).